The following is an 82-amino-acid chain: MKLTCMMIVAVLFLTAWTFVTAVPHSSNVLENLYLKARHEMENQEASKLNMRDDDCEPPGNFCGFPKIGGPCCSGWCFFACA.

Positions 1 to 22 are cleaved as a signal peptide; sequence MKLTCMMIVAVLFLTAWTFVTA. The propeptide occupies 23–52; sequence VPHSSNVLENLYLKARHEMENQEASKLNMR. 3 disulfide bridges follow: Cys-56–Cys-73, Cys-63–Cys-77, and Cys-72–Cys-81. Position 76 is a 6'-bromotryptophan; partial; in Am6.2b (major form) (Trp-76).

This sequence belongs to the conotoxin O1 family. Mostly non-hydroxylated. Post-translationally, two forms of this peptides have been described. Am6.2a (Am3136) is not unmodified, while Am6.2b (Am3214) is Trp-76 brominated. Both forms are found in venom with a much more abundant brominated form. Expressed by the venom duct.

The protein resides in the secreted. Its function is as follows. Omega-conotoxins act at presynaptic membranes, they bind and block voltage-gated calcium channels (Cav). The sequence is that of Omega-conotoxin-like Am6.2 from Conus amadis (Amadis cone).